Here is a 103-residue protein sequence, read N- to C-terminus: Large ribosomal subunit protein bL21 (103 aa).

This sequence belongs to the bacterial ribosomal protein bL21 family. In terms of assembly, part of the 50S ribosomal subunit. Contacts protein L20.

Its function is as follows. This protein binds to 23S rRNA in the presence of protein L20. This is Large ribosomal subunit protein bL21 from Methylococcus capsulatus (strain ATCC 33009 / NCIMB 11132 / Bath).